The primary structure comprises 124 residues: MFKTILAVSAAGIAGTLLRFAAGTWVSANWPKHFYAATLAVNLVGCLIIGLLYGWFLLRPEVPIEIRAGLIVGFVGGLTTFSSFSLDTLRLLESGQALIAFGYLGISVFGGLLATWAGLSLTKL.

The next 4 helical transmembrane spans lie at 5 to 25 (ILAV…AGTW), 38 to 58 (TLAV…WFLL), 69 to 89 (GLIV…LDTL), and 97 to 117 (ALIA…ATWA). Na(+) is bound by residues Gly-76 and Thr-79.

The protein belongs to the fluoride channel Fluc/FEX (TC 1.A.43) family.

The protein localises to the cell inner membrane. It carries out the reaction fluoride(in) = fluoride(out). Its activity is regulated as follows. Na(+) is not transported, but it plays an essential structural role and its presence is essential for fluoride channel function. Its function is as follows. Fluoride-specific ion channel. Important for reducing fluoride concentration in the cell, thus reducing its toxicity. This Pseudomonas fluorescens (strain SBW25) protein is Fluoride-specific ion channel FluC.